A 376-amino-acid chain; its full sequence is Chaperone protein DnaJ (376 aa).

The region spanning 5–69 (DYYEVLGISK…QKRAQYDQYG (65 aa)) is the J domain. The CR-type zinc-finger motif lies at 133-215 (GKDAEIEIPR…CHGKGRVTKT (83 aa)). Residues Cys-146, Cys-149, Cys-163, Cys-166, Cys-189, Cys-192, Cys-203, and Cys-206 each coordinate Zn(2+). CXXCXGXG motif repeat units lie at residues 146–153 (CDTCHGSG), 163–170 (CSHCGGKG), 189–196 (CQYCNGTG), and 203–210 (CPTCHGKG).

Belongs to the DnaJ family. In terms of assembly, homodimer. Zn(2+) is required as a cofactor.

The protein localises to the cytoplasm. Functionally, participates actively in the response to hyperosmotic and heat shock by preventing the aggregation of stress-denatured proteins and by disaggregating proteins, also in an autonomous, DnaK-independent fashion. Unfolded proteins bind initially to DnaJ; upon interaction with the DnaJ-bound protein, DnaK hydrolyzes its bound ATP, resulting in the formation of a stable complex. GrpE releases ADP from DnaK; ATP binding to DnaK triggers the release of the substrate protein, thus completing the reaction cycle. Several rounds of ATP-dependent interactions between DnaJ, DnaK and GrpE are required for fully efficient folding. Also involved, together with DnaK and GrpE, in the DNA replication of plasmids through activation of initiation proteins. The sequence is that of Chaperone protein DnaJ from Listeria monocytogenes serotype 4a (strain HCC23).